Reading from the N-terminus, the 308-residue chain is CAAX prenyl protease 2 (308 aa).

The residue at position 2 (A2) is an N-acetylalanine. 3 helical membrane-spanning segments follow: residues 25–45 (ALSSPGPGLCCWVSVFSCFSL), 75–95 (VLVVSSLSPLCVLLWRELTGI), and 112–132 (IFPAALLPLLLTMILFLGPLM). E175 serves as the catalytic Proton donor/acceptor. Residues 186–206 (MLAPCTGLGPAVFTCPLFFGV) traverse the membrane as a helical segment. The active-site Proton donor/acceptor is H208. Transmembrane regions (helical) follow at residues 233 to 253 (LIGPVLCHSFCNYMGFPAVCA) and 262 to 282 (PLLAGYALGVGLFLLLLQPLT).

The protein belongs to the peptidase U48 family. Ubiquitinated. Undergoes 'Lys-48'- and 'Lys-63'-linked ubiquitination. 'Lys-48' ubiquitination induces its degradation. Deubiquitinated by USP17L2/USP17 that cleaves 'Lys-63'-linked ubiquitin chains.

The protein localises to the endoplasmic reticulum membrane. It catalyses the reaction Hydrolyzes the peptide bond -P2-(S-farnesyl or geranylgeranyl)C-P1'-P2'-P3'-COOH where P1' and P2' are amino acids with aliphatic sidechains and P3' is any C-terminal residue.. With respect to regulation, deubiquitination by USP17L2/USP17 negatively regulates the proteolytic activity toward Ras GTPases. Protease involved in the processing of a variety of prenylated proteins containing the C-terminal CAAX motif, where C is a cysteine modified with an isoprenoid lipid, A is an aliphatic amino acid and X is any C-terminal amino acid. Proteolytically removes the C-terminal three residues of farnesylated and geranylated proteins, leaving the prenylated cysteine as the new C-terminus. Is able to process K-Ras, N-Ras, H-Ras, RAP1B and G-gamma-1. This Rattus norvegicus (Rat) protein is CAAX prenyl protease 2 (Rce1).